A 970-amino-acid polypeptide reads, in one-letter code: Transcriptional activator protein DAL81 (970 aa).

Disordered stretches follow at residues 1 to 44 (MDPH…NHDI), 64 to 95 (NILR…QQQS), and 118 to 140 (DNVS…NNDI). 3 stretches are compositionally biased toward low complexity: residues 15-41 (TKSV…NNSN), 73-94 (QQQQ…QQQQ), and 121-140 (SNSA…NNDI). A DNA-binding region (zn(2)-C6 fungal-type) is located at residues 150-179 (CNQCRLKKTKCNYFPDLGNCLECETSRTKC). A compositionally biased stretch (low complexity) spans 807-823 (SFPNGTTSTTTPVNPTS). The segment at 807-970 (SFPNGTTSTT…VTINTRETPL (164 aa)) is disordered. Composition is skewed to polar residues over residues 824-836 (RQTQ…SPAI) and 858-870 (KTSQ…TPSH). Phosphoserine is present on S833. The span at 875–894 (PPSNTSSPRVNSSTNVNSNT) shows a compositional bias: low complexity. Positions 895–906 (QMNASPLTSINE) are enriched in polar residues. Positions 907 to 938 (TRQESGDAADEKTAGRERTANEESSTELKDDN) are enriched in basic and acidic residues. 2 stretches are compositionally biased toward polar residues: residues 939–954 (PNSN…QTIK) and 961–970 (VTINTRETPL).

The protein localises to the nucleus. Positive regulation of genes required for catabolism of GABA (UGA4, UGA1, and UGA2), urea (DUR1 and DUR2), arginine and allantoin. The polypeptide is Transcriptional activator protein DAL81 (DAL81) (Saccharomyces cerevisiae (strain ATCC 204508 / S288c) (Baker's yeast)).